Here is a 274-residue protein sequence, read N- to C-terminus: Sulfur carrier protein FdhD (274 aa).

The active-site Cysteine persulfide intermediate is C121. 258-263 (FSKPGR) contacts Mo-bis(molybdopterin guanine dinucleotide).

This sequence belongs to the FdhD family.

The protein localises to the cytoplasm. Functionally, required for formate dehydrogenase (FDH) activity. Acts as a sulfur carrier protein that transfers sulfur from IscS to the molybdenum cofactor prior to its insertion into FDH. The polypeptide is Sulfur carrier protein FdhD (Yersinia pseudotuberculosis serotype IB (strain PB1/+)).